Here is a 592-residue protein sequence, read N- to C-terminus: E3 ubiquitin-protein ligase RNF180 (592 aa).

Topologically, residues 1–564 are cytoplasmic; the sequence is MKRSEESTST…DSRGWWFDMD (564 aa). Serine 231 bears the Phosphoserine mark. The interval 282 to 489 is interaction with ZIC2; the sequence is QSPPSFDPNM…VFLQTELNNA (208 aa). The RING-type zinc-finger motif lies at 432–474; sequence CAVCLDVYFNPYMCYPCHHIFCEPCLRTLAKDNPASTPCPLCR. A helical transmembrane segment spans residues 565-585; it reads MVIIYIYSVNWVIGFVVFCFL. At 586-592 the chain is on the extracellular side; the sequence is CYFFFPF.

Interacts with ZIC2. Brain, kidney, testis and uterus. membrane protein. Nucleus envelope.

It localises to the endoplasmic reticulum membrane. Its subcellular location is the nucleus envelope. The catalysed reaction is S-ubiquitinyl-[E2 ubiquitin-conjugating enzyme]-L-cysteine + [acceptor protein]-L-lysine = [E2 ubiquitin-conjugating enzyme]-L-cysteine + N(6)-ubiquitinyl-[acceptor protein]-L-lysine.. Its pathway is protein modification; protein ubiquitination. In terms of biological role, E3 ubiquitin-protein ligase which promotes polyubiquitination and degradation by the proteasome pathway of ZIC2. In Mus musculus (Mouse), this protein is E3 ubiquitin-protein ligase RNF180 (Rnf180).